The sequence spans 687 residues: A-kinase anchor protein 8 (687 aa).

The interaction with MCM2 stretch occupies residues 1–195 (MEQGYGGYGA…FLRGRGQGRF (195 aa)). An interaction with DPY30 region spans residues 1-210 (MEQGYGGYGA…SSTFIRSDPF (210 aa)). Ser-72 carries the phosphoserine modification. 2 disordered regions span residues 105-124 (KEGG…DRDS) and 185-218 (GFLR…ASEP). Residue Arg-109 is modified to Asymmetric dimethylarginine; alternate. An Omega-N-methylarginine; alternate modification is found at Arg-109. The segment covering 109–118 (RGGISSGGEG) has biased composition (gly residues). The interaction with DDX5 stretch occupies residues 109 to 201 (RGGISSGGEG…QGRFQDRSNS (93 aa)). Ser-199 is modified (phosphoserine). Omega-N-methylarginine occurs at positions 232 and 276. The tract at residues 277 to 379 (SQTRIRDWPR…KQRRRDRMRD (103 aa)) is disordered. Basic and acidic residues-rich tracts occupy residues 280–294 (RIRD…ERFG) and 311–320 (PDAKLARADS). A Bipartite nuclear localization signal motif is present at residues 286 to 303 (RRRGFERFGPDNMGRKRK). A Glycyl lysine isopeptide (Lys-Gly) (interchain with G-Cter in SUMO2) cross-link involves residue Lys-314. Ser-320, Ser-325, and Ser-336 each carry phosphoserine. A compositionally biased stretch (acidic residues) spans 321–331 (DGDLSENDDGA). A compositionally biased stretch (basic and acidic residues) spans 335 to 357 (RSGDEEFRGEDDLCDSRKQRGEK). The segment at 384–447 (RIQFACSVCK…NKKIEKRRQE (64 aa)) is involved in chromatin-binding. 2 C2H2 AKAP95-type zinc fingers span residues 389–411 (CSVC…SKFH) and 478–501 (CLAC…SVDH). Positions 522–565 (SVLNNKHIVKMLEKYLKGEDPFVNETADLETEGDENVGEEKEET) are involved in condensin complex recruitment. Residue Thr-552 is modified to Phosphothreonine. Residues 568–585 (EVAAEVLAEVITAAVKAV) form an RII-binding region. Residues 572 to 589 (EVLAEVITAAVKAVEGEG) form a required for interaction with MYCBP region. The tract at residues 624–659 (QTCEAASETRSIEDKTRGEAAEARNEAAMPTADAGS) is disordered. A compositionally biased stretch (basic and acidic residues) spans 633–648 (RSIEDKTRGEAAEARN). Ser-659 bears the Phosphoserine mark.

This sequence belongs to the AKAP95 family. In terms of assembly, binds to the PKA RII-alpha regulatory subunit PRKAR2A. Interacts (via C-terminus) with FIGN. Interacts with NCAPD2, CCND3, CCNE1, MCM2, RPS6KA1, DDX5, PDE4A. Interacts with MYCBP; MYCBP is translocated to the nucleus and the interaction prevents the association of the PKA catalytic subunit leading to suppression of PKA activity. Interacts with CCND1, CASP3. Interacts with NFKB1; detetcted in the cytoplasm. Interacts with DPY30; mediating AKAP8 association with at least the MLL4/WBP7 HMT complex. Interacts with HDAC3; increased during mitosis. Interacts with GJA1; in the nucleus and in the nuclear membrane; the nuclear association increases with progress of cell cycle G1, S and G2 phase and decreases in M phase. Phosphorylated on tyrosine residues probably by SRC subfamily protein kinases; multiple phosphorylation is leading to dissociation from nuclear structures implicated in chromatin structural changes.

It is found in the nucleus matrix. It localises to the nucleus. The protein resides in the nucleolus. The protein localises to the cytoplasm. Anchoring protein that mediates the subcellular compartmentation of cAMP-dependent protein kinase (PKA type II). Acts as an anchor for a PKA-signaling complex onto mitotic chromosomes, which is required for maintenance of chromosomes in a condensed form throughout mitosis. Recruits condensin complex subunit NCAPD2 to chromosomes required for chromatin condensation; the function appears to be independent from PKA-anchoring. Specifically involved in recruitment of CAPD2 to, and condensation of maternal but not paternal chromosomes. May help to deliver cyclin D/E to CDK4 to facilitate cell cycle progression. Required for cell cycle G2/M transition and histone deacetylation during mitosis. In mitotic cells recruits HDAC3 to the vicinity of chromatin leading to deacetylation and subsequent phosphorylation at 'Ser-10' of histone H3; in this function may act redundantly with AKAP8L. Involved in nuclear retention of RPS6KA1 upon ERK activation thus inducing cell proliferation. May be involved in regulation of DNA replication by acting as scaffold for MCM2. Enhances HMT activity of the KMT2 family MLL4/WBP7 complex and is involved in transcriptional regulation. In a teratocarcinoma cell line is involved in retinoic acid-mediated induction of developmental genes implicating H3 'Lys-4' methylation. May be involved in recruitment of active CASP3 to the nucleus in apoptotic cells. May act as a carrier protein of GJA1 for its transport to the nucleus. May play a repressive role in the regulation of rDNA transcription. Preferentially binds GC-rich DNA in vitro. In cells, associates with ribosomal RNA (rRNA) chromatin, preferentially with rRNA promoter and transcribed regions. Involved in modulation of Toll-like receptor signaling. Required for the cAMP-dependent suppression of TNF-alpha in early stages of LPS-induced macrophage activation; the function probably implicates targeting of PKA to NFKB1. The sequence is that of A-kinase anchor protein 8 (Akap8) from Mus musculus (Mouse).